The chain runs to 977 residues: 2-oxoglutarate dehydrogenase E1 component (977 aa).

One can recognise an RPE1 insert domain in the interval 77 to 125 (VLNNRHLAKPAYREEFKGDTERSTAAYIDIREDASTGSTSKLPLEAKFG).

Belongs to the alpha-ketoglutarate dehydrogenase family. As to quaternary structure, homodimer. Part of the 2-oxoglutarate dehydrogenase (OGDH) complex composed of E1 (2-oxoglutarate dehydrogenase), E2 (dihydrolipoamide succinyltransferase) and E3 (dihydrolipoamide dehydrogenase); the complex contains multiple copies of the three enzymatic components (E1, E2 and E3). It depends on thiamine diphosphate as a cofactor.

The catalysed reaction is N(6)-[(R)-lipoyl]-L-lysyl-[protein] + 2-oxoglutarate + H(+) = N(6)-[(R)-S(8)-succinyldihydrolipoyl]-L-lysyl-[protein] + CO2. E1 component of the 2-oxoglutarate dehydrogenase (OGDH) complex which catalyzes the decarboxylation of 2-oxoglutarate, the first step in the conversion of 2-oxoglutarate to succinyl-CoA and CO(2). The sequence is that of 2-oxoglutarate dehydrogenase E1 component (sucA) from Rickettsia felis (strain ATCC VR-1525 / URRWXCal2) (Rickettsia azadi).